The primary structure comprises 20 residues: FLNPFRWMINKYREWKNKKN.

As to expression, expressed by the venom gland.

Its subcellular location is the secreted. The polypeptide is Cupiennin-6f (Cupiennius salei (American wandering spider)).